Reading from the N-terminus, the 650-residue chain is Chaperone protein DnaK (650 aa).

A Phosphothreonine; by autocatalysis modification is found at T200.

This sequence belongs to the heat shock protein 70 family.

Acts as a chaperone. The chain is Chaperone protein DnaK from Burkholderia orbicola (strain MC0-3).